Reading from the N-terminus, the 473-residue chain is Glycine--tRNA ligase (473 aa).

Substrate contacts are provided by R101 and E172. ATP contacts are provided by residues 204-206, 214-219, 289-290, and 333-336; these read RNE, FRTREF, EL, and GVER. 219 to 223 provides a ligand contact to substrate; sequence FEQME. Residue 329–333 coordinates substrate; sequence EPSVG.

Belongs to the class-II aminoacyl-tRNA synthetase family. In terms of assembly, homodimer.

The protein localises to the cytoplasm. It catalyses the reaction tRNA(Gly) + glycine + ATP = glycyl-tRNA(Gly) + AMP + diphosphate. Functionally, catalyzes the attachment of glycine to tRNA(Gly). In Ureaplasma urealyticum serovar 10 (strain ATCC 33699 / Western), this protein is Glycine--tRNA ligase.